The chain runs to 22 residues: Heliocin (22 aa).

The residue at position 1 (Gln-1) is a Pyrrolidone carboxylic acid. Residues 1-22 (QRFIHPTYRPPPQPRRPVIMRA) form a disordered region. The O-linked (GalNAc...) threonine glycan is linked to Thr-7.

In terms of assembly, monomer. Hemolymph.

The protein localises to the secreted. Its function is as follows. Has antibacterial activity, preferentially against Gram-negative bacteria. The chain is Heliocin from Heliothis virescens (Tobacco budworm moth).